The sequence spans 1419 residues: DNA-directed RNA polymerase subunit beta' (1419 aa).

Residues cysteine 71, cysteine 73, cysteine 86, and cysteine 89 each coordinate Zn(2+). Residues aspartate 461, aspartate 463, and aspartate 465 each contribute to the Mg(2+) site. Zn(2+) is bound by residues cysteine 815, cysteine 889, cysteine 896, and cysteine 899.

It belongs to the RNA polymerase beta' chain family. As to quaternary structure, the RNAP catalytic core consists of 2 alpha, 1 beta, 1 beta' and 1 omega subunit. When a sigma factor is associated with the core the holoenzyme is formed, which can initiate transcription. Requires Mg(2+) as cofactor. The cofactor is Zn(2+).

The catalysed reaction is RNA(n) + a ribonucleoside 5'-triphosphate = RNA(n+1) + diphosphate. DNA-dependent RNA polymerase catalyzes the transcription of DNA into RNA using the four ribonucleoside triphosphates as substrates. The sequence is that of DNA-directed RNA polymerase subunit beta' from Actinobacillus succinogenes (strain ATCC 55618 / DSM 22257 / CCUG 43843 / 130Z).